We begin with the raw amino-acid sequence, 239 residues long: Ribosomal RNA small subunit methyltransferase A (239 aa).

Residues asparagine 23, isoleucine 25, glycine 50, glutamate 72, aspartate 97, and asparagine 116 each coordinate S-adenosyl-L-methionine.

The protein belongs to the class I-like SAM-binding methyltransferase superfamily. rRNA adenine N(6)-methyltransferase family. RsmA subfamily.

It is found in the cytoplasm. It catalyses the reaction adenosine(1518)/adenosine(1519) in 16S rRNA + 4 S-adenosyl-L-methionine = N(6)-dimethyladenosine(1518)/N(6)-dimethyladenosine(1519) in 16S rRNA + 4 S-adenosyl-L-homocysteine + 4 H(+). Its function is as follows. Specifically dimethylates two adjacent adenosines (A1518 and A1519) in the loop of a conserved hairpin near the 3'-end of 16S rRNA in the 30S particle. May play a critical role in biogenesis of 30S subunits. This is Ribosomal RNA small subunit methyltransferase A from Rickettsia felis (strain ATCC VR-1525 / URRWXCal2) (Rickettsia azadi).